We begin with the raw amino-acid sequence, 367 residues long: tRNA 2-selenouridine synthase (367 aa).

The 124-residue stretch at 12–135 folds into the Rhodanese domain; the sequence is FLSGVAMLDV…MRGFLIETTD (124 aa). Residue cysteine 95 is the S-selanylcysteine intermediate of the active site.

It belongs to the SelU family. As to quaternary structure, monomer.

It carries out the reaction 5-methylaminomethyl-2-thiouridine(34) in tRNA + selenophosphate + (2E)-geranyl diphosphate + H2O + H(+) = 5-methylaminomethyl-2-selenouridine(34) in tRNA + (2E)-thiogeraniol + phosphate + diphosphate. It catalyses the reaction 5-methylaminomethyl-2-thiouridine(34) in tRNA + (2E)-geranyl diphosphate = 5-methylaminomethyl-S-(2E)-geranyl-thiouridine(34) in tRNA + diphosphate. The enzyme catalyses 5-methylaminomethyl-S-(2E)-geranyl-thiouridine(34) in tRNA + selenophosphate + H(+) = 5-methylaminomethyl-2-(Se-phospho)selenouridine(34) in tRNA + (2E)-thiogeraniol. The catalysed reaction is 5-methylaminomethyl-2-(Se-phospho)selenouridine(34) in tRNA + H2O = 5-methylaminomethyl-2-selenouridine(34) in tRNA + phosphate. Functionally, involved in the post-transcriptional modification of the uridine at the wobble position (U34) of tRNA(Lys), tRNA(Glu) and tRNA(Gln). Catalyzes the conversion of 2-thiouridine (S2U-RNA) to 2-selenouridine (Se2U-RNA). Acts in a two-step process involving geranylation of 2-thiouridine (S2U) to S-geranyl-2-thiouridine (geS2U) and subsequent selenation of the latter derivative to 2-selenouridine (Se2U) in the tRNA chain. The polypeptide is tRNA 2-selenouridine synthase (Cupriavidus necator (strain ATCC 17699 / DSM 428 / KCTC 22496 / NCIMB 10442 / H16 / Stanier 337) (Ralstonia eutropha)).